We begin with the raw amino-acid sequence, 112 residues long: Large ribosomal subunit protein bL17 (112 aa).

This sequence belongs to the bacterial ribosomal protein bL17 family. As to quaternary structure, part of the 50S ribosomal subunit. Contacts protein L32.

The polypeptide is Large ribosomal subunit protein bL17 (Carboxydothermus hydrogenoformans (strain ATCC BAA-161 / DSM 6008 / Z-2901)).